The following is a 269-amino-acid chain: Phosphate import ATP-binding protein PstB 2 (269 aa).

Residues leucine 23 to isoleucine 264 enclose the ABC transporter domain. Glycine 55–serine 62 contacts ATP.

It belongs to the ABC transporter superfamily. Phosphate importer (TC 3.A.1.7) family. As to quaternary structure, the complex is composed of two ATP-binding proteins (PstB), two transmembrane proteins (PstC and PstA) and a solute-binding protein (PstS).

It is found in the cell membrane. It carries out the reaction phosphate(out) + ATP + H2O = ADP + 2 phosphate(in) + H(+). Part of the ABC transporter complex PstSACB involved in phosphate import. Responsible for energy coupling to the transport system. The sequence is that of Phosphate import ATP-binding protein PstB 2 from Bacillus subtilis (strain 168).